Reading from the N-terminus, the 179-residue chain is ATP-dependent protease subunit HslV (179 aa).

T8 is an active-site residue. Na(+) is bound by residues G163, C166, and T169.

This sequence belongs to the peptidase T1B family. HslV subfamily. A double ring-shaped homohexamer of HslV is capped on each side by a ring-shaped HslU homohexamer. The assembly of the HslU/HslV complex is dependent on binding of ATP.

It localises to the cytoplasm. It catalyses the reaction ATP-dependent cleavage of peptide bonds with broad specificity.. Its activity is regulated as follows. Allosterically activated by HslU binding. Its function is as follows. Protease subunit of a proteasome-like degradation complex believed to be a general protein degrading machinery. The polypeptide is ATP-dependent protease subunit HslV (Solibacter usitatus (strain Ellin6076)).